The sequence spans 129 residues: Small ribosomal subunit protein eS6 (129 aa).

Belongs to the eukaryotic ribosomal protein eS6 family.

The sequence is that of Small ribosomal subunit protein eS6 from Methanocorpusculum labreanum (strain ATCC 43576 / DSM 4855 / Z).